Consider the following 93-residue polypeptide: Large ribosomal subunit protein bL27 (93 aa).

A propeptide spanning residues 1–10 (MLLKLQIQLF) is cleaved from the precursor.

This sequence belongs to the bacterial ribosomal protein bL27 family. In terms of processing, the N-terminus is cleaved by ribosomal processing cysteine protease Prp.

This is Large ribosomal subunit protein bL27 from Phytoplasma australiense.